Reading from the N-terminus, the 157-residue chain is Small ribosomal subunit protein uS7 (157 aa).

The protein belongs to the universal ribosomal protein uS7 family. Part of the 30S ribosomal subunit. Contacts proteins S9 and S11.

Its function is as follows. One of the primary rRNA binding proteins, it binds directly to 16S rRNA where it nucleates assembly of the head domain of the 30S subunit. Is located at the subunit interface close to the decoding center, probably blocks exit of the E-site tRNA. This chain is Small ribosomal subunit protein uS7, found in Paracidovorax citrulli (strain AAC00-1) (Acidovorax citrulli).